Reading from the N-terminus, the 867-residue chain is Xylosyltransferase 2 (867 aa).

Topologically, residues 1–15 (MVASARVQKLVRRYK) are cytoplasmic. Residues 16–36 (LAIATALAILLLQGLVVWSFS) form a helical; Signal-anchor for type II membrane protein membrane-spanning segment. Residues 37–867 (VLEDDEPGEK…GPVKADGRLR (831 aa)) are Lumenal-facing. A disordered region spans residues 41–122 (DEPGEKGRQK…PPPEAPGRQN (82 aa)). Residues 53–65 (RPLDPSEGSKDTD) show a composition bias toward basic and acidic residues. Over residues 73 to 82 (SAGRRHGRWR) the composition is skewed to basic residues. A glycan (N-linked (GlcNAc...) asparagine) is linked at Asn-122. Cystine bridges form between Cys-161/Cys-189 and Cys-205/Cys-447. Residues Val-238, Asp-266, and 295–297 (TIW) each bind UDP-alpha-D-xylose. N-linked (GlcNAc...) asparagine glycosylation is present at Asn-326. UDP-alpha-D-xylose is bound by residues 399–400 (DW), Ser-480, and 503–504 (RK). 2 disulfides stabilise this stretch: Cys-580–Cys-835 and Cys-828–Cys-841. Asn-685 is a glycosylation site (N-linked (GlcNAc...) asparagine).

Belongs to the glycosyltransferase 14 family. XylT subfamily. In terms of assembly, monomer. It depends on Mg(2+) as a cofactor. Mn(2+) serves as cofactor. Contains disulfide bonds.

It is found in the golgi apparatus membrane. The protein resides in the secreted. It carries out the reaction UDP-alpha-D-xylose + L-seryl-[protein] = 3-O-(beta-D-xylosyl)-L-seryl-[protein] + UDP + H(+). The protein operates within glycan metabolism; chondroitin sulfate biosynthesis. It functions in the pathway glycan metabolism; heparan sulfate biosynthesis. Functionally, catalyzes the first step in the biosynthesis of chondroitin sulfate, heparan sulfate and dermatan sulfate proteoglycans, such as DCN. Transfers D-xylose from UDP-D-xylose to specific serine residues of the core protein. The chain is Xylosyltransferase 2 (XYLT2) from Bos taurus (Bovine).